The following is a 549-amino-acid chain: Hydroxylamine reductase (549 aa).

Cysteine 5, cysteine 8, cysteine 17, and cysteine 23 together coordinate [4Fe-4S] cluster. Residues histidine 243, glutamate 267, cysteine 311, cysteine 403, cysteine 431, cysteine 456, glutamate 491, and lysine 493 each coordinate hybrid [4Fe-2O-2S] cluster. Cysteine 403 is modified (cysteine persulfide).

The protein belongs to the HCP family. [4Fe-4S] cluster serves as cofactor. It depends on hybrid [4Fe-2O-2S] cluster as a cofactor.

The protein resides in the cytoplasm. It catalyses the reaction A + NH4(+) + H2O = hydroxylamine + AH2 + H(+). Its function is as follows. Catalyzes the reduction of hydroxylamine to form NH(3) and H(2)O. The protein is Hydroxylamine reductase of Desulfitobacterium hafniense (strain Y51).